The sequence spans 127 residues: Protein ApaG (127 aa).

Positions 3 to 127 constitute an ApaG domain; that stretch reads DADVYAISVE…FVLAIPRTLH (125 aa).

This Stenotrophomonas maltophilia (strain K279a) protein is Protein ApaG.